We begin with the raw amino-acid sequence, 316 residues long: UDP-3-O-acylglucosamine N-acyltransferase 2 (316 aa).

The active-site Proton acceptor is histidine 230.

Belongs to the transferase hexapeptide repeat family. LpxD subfamily. Homotrimer.

The catalysed reaction is a UDP-3-O-[(3R)-3-hydroxyacyl]-alpha-D-glucosamine + a (3R)-hydroxyacyl-[ACP] = a UDP-2-N,3-O-bis[(3R)-3-hydroxyacyl]-alpha-D-glucosamine + holo-[ACP] + H(+). It participates in bacterial outer membrane biogenesis; LPS lipid A biosynthesis. Its function is as follows. Catalyzes the N-acylation of UDP-3-O-acylglucosamine using 3-hydroxyacyl-ACP as the acyl donor. Is involved in the biosynthesis of lipid A, a phosphorylated glycolipid that anchors the lipopolysaccharide to the outer membrane of the cell. The sequence is that of UDP-3-O-acylglucosamine N-acyltransferase 2 from Sulfurimonas denitrificans (strain ATCC 33889 / DSM 1251) (Thiomicrospira denitrificans (strain ATCC 33889 / DSM 1251)).